The sequence spans 555 residues: Glutamate--tRNA ligase (555 aa).

A 'HIGH' region motif is present at residues 100-110 (PNPSGPLHIGH).

The protein belongs to the class-I aminoacyl-tRNA synthetase family. Glutamate--tRNA ligase type 2 subfamily.

It localises to the cytoplasm. It catalyses the reaction tRNA(Glu) + L-glutamate + ATP = L-glutamyl-tRNA(Glu) + AMP + diphosphate. Functionally, catalyzes the attachment of glutamate to tRNA(Glu) in a two-step reaction: glutamate is first activated by ATP to form Glu-AMP and then transferred to the acceptor end of tRNA(Glu). This is Glutamate--tRNA ligase from Methanococcus maripaludis (strain C5 / ATCC BAA-1333).